Here is a 344-residue protein sequence, read N- to C-terminus: Putative transport protein sll0060 (344 aa).

8 consecutive transmembrane segments (helical) span residues 14–34 (LWIGLTLPLCLLNGWVLLQIL), 41–61 (LRIFIIANLVAFILGYPVRWL), 72–92 (AVALVLLTTAIILAVIGLLVI), 155–175 (LINLLIWTAGSLVEAGFIFIM), 215–235 (IGQATVAALLGVSLIISLSIF), 237–257 (VPLALLFGMFVGFMAFFPFGG), 262–282 (VLISIIASFQSIWLGIKVLAI), and 310–330 (ILLSLMIGAKVAGLLGILVAI).

This sequence belongs to the autoinducer-2 exporter (AI-2E) (TC 2.A.86) family.

The protein resides in the cell membrane. In Synechocystis sp. (strain ATCC 27184 / PCC 6803 / Kazusa), this protein is Putative transport protein sll0060.